A 504-amino-acid chain; its full sequence is Glucosaminyl-phosphatidylinositol-acyltransferase PIGW (504 aa).

Residues 1–21 are Lumenal-facing; it reads MSEKQMKEAFVSNLNGTTVLE. N15 carries an N-linked (GlcNAc...) asparagine glycan. Residues 22-42 traverse the membrane as a helical segment; the sequence is ITQGLCFPAFCILCRGFLIIF. The Cytoplasmic portion of the chain corresponds to 43-56; it reads SQYLCSFSPTWKTR. The chain crosses the membrane as a helical span at residues 57–75; the sequence is FLTDFVVLIVPMVATLTIW. Residues 76 to 81 are Lumenal-facing; that stretch reads ASFILL. The chain crosses the membrane as a helical span at residues 82 to 98; sequence ELLGVIIFGAGLLYQIY. Residues 99-131 lie on the Cytoplasmic side of the membrane; the sequence is RRRTCYARLPFLKILEKFLNISLESEYNPAISC. Residues 132–152 traverse the membrane as a helical segment; it reads FRVITSAFTAIAILAVDFPLF. Over 153-162 the chain is Lumenal; the sequence is PRRFAKTELY. Residues 163-183 form a helical membrane-spanning segment; it reads GTGAMDFGVGGFVFGSAMVCL. The Cytoplasmic portion of the chain corresponds to 184–202; sequence EVRRRKYMEGSKLHYFTNS. A helical transmembrane segment spans residues 203-223; it reads LYSVWPLVFLGIGRLAIIKSI. At 224 to 237 the chain is on the lumenal side; that stretch reads GYQEHLTEYGVHWN. The chain crosses the membrane as a helical span at residues 238 to 258; the sequence is FFFTIIVVKLITPLLLIIFPL. The Cytoplasmic segment spans residues 259 to 260; that stretch reads NK. Residues 261–281 traverse the membrane as a helical segment; the sequence is SWIIALGITVLYQLALDFTSL. Residues 282–305 are Lumenal-facing; the sequence is KRLILYGTDGSGTRVGLLNANREG. The chain crosses the membrane as a helical span at residues 306 to 326; it reads IISTLGYVAIHMAGVQTGLYM. Residues 327–338 are Cytoplasmic-facing; sequence HKNRSHIKDLIK. The helical transmembrane segment at 339 to 359 threads the bilayer; the sequence is VACFLLLAAISLFISLYVVQV. Topologically, residues 360 to 370 are lumenal; sequence NVEAVSRRMAN. The chain crosses the membrane as a helical span at residues 371-391; that stretch reads LAFCIWIVASSLILLSSLLLG. Over 392 to 448 the chain is Cytoplasmic; it reads DIILSFAKFLIKGALVPCSWKLIQSPVTNKKHSESLVPEAERMEPSLCLITALNRKQ. A Phosphoserine modification is found at S416. The helical transmembrane segment at 449 to 469 threads the bilayer; that stretch reads LIFFLLSNITTGLINLMVDTL. Residues 470–473 lie on the Lumenal side of the membrane; that stretch reads HSST. Residues 474-494 form a helical membrane-spanning segment; sequence LWALFVVNLYMFSNCLIVYVL. The Cytoplasmic segment spans residues 495–504; the sequence is YLQDKTVQFW.

The protein belongs to the PIGW family.

The protein localises to the endoplasmic reticulum membrane. It functions in the pathway glycolipid biosynthesis; glycosylphosphatidylinositol-anchor biosynthesis. Acyltransferase that catalyzes the acyl transfer from an acyl-CoA at the 2-OH position of the inositol ring of glucosaminyl phosphatidylinositol (GlcN-PI) to generate glucosaminyl acyl phosphatidylinositol (GlcN-(acyl)PI) and participates in the fourth step of GPI-anchor biosynthesis. Required for the transport of GPI-anchored proteins to the plasma membrane. Acetylation during GPI-anchor biosynthesis is not essential for the subsequent mannosylation and is usually removed soon after the attachment of GPIs to proteins. The chain is Glucosaminyl-phosphatidylinositol-acyltransferase PIGW from Homo sapiens (Human).